A 392-amino-acid polypeptide reads, in one-letter code: Protein O-glucosyltransferase 1 (392 aa).

The first 23 residues, methionine 1–glycine 23, serve as a signal peptide directing secretion. 4 cysteine pairs are disulfide-bonded: cysteine 49–cysteine 56, cysteine 54–cysteine 357, cysteine 102–cysteine 108, and cysteine 263–cysteine 286. Asparagine 53 is a glycosylation site (N-linked (GlcNAc...) asparagine). Residues methionine 103–arginine 107 are interaction with the consensus sequence C-X-S-X-[PA]-C in peptide substrates. Catalysis depends on aspartate 133, which acts as the Proton donor/acceptor. Residues alanine 172 to proline 178 are interaction with the consensus sequence C-X-S-X-[PA]-C in peptide substrates. Residue tyrosine 177 coordinates UDP-alpha-D-glucose. N-linked (GlcNAc...) asparagine glycosylation is present at asparagine 204. Residues serine 212, arginine 218, and valine 274–arginine 279 contribute to the UDP-alpha-D-glucose site. An N-linked (GlcNAc...) asparagine glycan is attached at asparagine 373. Positions lysine 389 to leucine 392 match the Prevents secretion from ER motif.

This sequence belongs to the glycosyltransferase 90 family.

Its subcellular location is the endoplasmic reticulum lumen. The catalysed reaction is L-seryl-[EGF-like domain protein] + UDP-alpha-D-xylose = 3-O-(beta-D-xylosyl)-L-seryl-[EGF-like domain protein] + UDP + H(+). The enzyme catalyses L-seryl-[EGF-like domain protein] + UDP-alpha-D-glucose = 3-O-(beta-D-glucosyl)-L-seryl-[EGF-like domain protein] + UDP + H(+). Its pathway is protein modification; protein glycosylation. Its function is as follows. Dual specificity glycosyltransferase that catalyzes the transfer of glucose and xylose from UDP-glucose and UDP-xylose, respectively, to a serine residue found in the consensus sequence of C-X-S-X-P-C. Specifically targets extracellular EGF repeats of protein such as CRB2, F7, F9 and NOTCH2. Acts as a positive regulator of Notch signaling by mediating O-glucosylation of Notch, leading to regulate muscle development. Notch glucosylation does not affect Notch ligand binding. Required during early development to promote gastrulation: acts by mediating O-glucosylation of CRB2, which is required for CRB2 localization to the cell membrane. The polypeptide is Protein O-glucosyltransferase 1 (Poglut1) (Rattus norvegicus (Rat)).